Reading from the N-terminus, the 288-residue chain is Serine/threonine-protein acetyltransferase YopJ (288 aa).

Residues His109 and Glu128 contribute to the active site. Residue His109 participates in CoA binding. 167–168 (RS) serves as a coordination point for CoA. Residue Cys172 is part of the active site. 1D-myo-inositol hexakisphosphate is bound by residues 182–185 (KLYI) and 224–225 (KH). 227-230 (QGKK) contributes to the CoA binding site. Residue Arg257 participates in 1D-myo-inositol hexakisphosphate binding. 266 to 270 (DGKEL) lines the CoA pocket.

The protein belongs to the acetyltransferase YopJ family. Requires 1D-myo-inositol hexakisphosphate as cofactor.

It is found in the secreted. It carries out the reaction L-threonyl-[protein] + acetyl-CoA = O-acetyl-L-threonyl-[protein] + CoA. The catalysed reaction is L-seryl-[protein] + acetyl-CoA = O-acetyl-L-seryl-[protein] + CoA. 1D-myo-inositol hexakisphosphate activates protein-acetyltransferase activity via an allosteric mechanism: 1D-myo-inositol hexakisphosphate-binding induces a conformational rearrangement that stimulates the interaction with acetyl-CoA. Functionally, serine/threonine-protein acetyltransferase translocated into infected cells, which inhibits the host immune response and induces cell death by mediating acetylation of target proteins. Inhibits the MAPK and NF-kappa-B signaling pathways by acetylating protein-kinases such as MAP2K1, MAP2K6, MAP3K7/TAK1 and I-kappa-B kinase (CHUK/IKKA and IKBKB) on serine and threonine residues critical for their activation by phosphorylation, thereby preventing protein-kinase activation. Promotes pyroptosis, a programmed cell death, in host cells by mediating acetylation of MAP3K7/TAK1: MAP3K7/TAK1 inactivation triggers activation of caspase-8 (CASP8), followed by CASP8-dependent cleavage of gasdermin-D (GSDMD) and induction of pyroptosis. Also able to induce intestinal barrier dysfunction by acetylating and inhibiting host protein-kinases RIPK2/RICK and MAP3K7/TAK1, thereby promoting cell death. The chain is Serine/threonine-protein acetyltransferase YopJ from Yersinia pseudotuberculosis serotype I (strain IP32953).